The chain runs to 103 residues: MESEEMLAGGLTEPRPATPEIQEIANKVKPQLEEKTKKTYEKFEAIIYRSQVVAGTNYYIKVHVGGNSYVHIIVFQNLPQLNEPLKLIGYQVDKTKDDELTGF.

Residues 1–20 are disordered; that stretch reads MESEEMLAGGLTEPRPATPE. A Secondary area of contact motif is present at residues 51-55; the sequence is QVVAG.

The protein belongs to the cystatin family.

Its subcellular location is the cytoplasm. Functionally, this is an intracellular thiol proteinase inhibitor. This Sus scrofa (Pig) protein is Cystatin-A8.